A 164-amino-acid polypeptide reads, in one-letter code: Large ribosomal subunit protein uL15 (164 aa).

Over residues 1–14 the composition is skewed to polar residues; that stretch reads MKLNEIQDNPGSSK. The tract at residues 1 to 35 is disordered; that stretch reads MKLNEIQDNPGSSKSRMRVGRGIGSGKGKTCGRGV. Positions 21–35 are enriched in gly residues; it reads RGIGSGKGKTCGRGV.

It belongs to the universal ribosomal protein uL15 family. As to quaternary structure, part of the 50S ribosomal subunit.

Binds to the 23S rRNA. The protein is Large ribosomal subunit protein uL15 of Methylocella silvestris (strain DSM 15510 / CIP 108128 / LMG 27833 / NCIMB 13906 / BL2).